The primary structure comprises 728 residues: Catalase-peroxidase 1 (728 aa).

The tryptophyl-tyrosyl-methioninium (Trp-Tyr) (with M-244) cross-link spans 91 to 218 (WHSAGTYRTA…LAAVQMGLIY (128 aa)). The active-site Proton acceptor is the histidine 92. The tryptophyl-tyrosyl-methioninium (Tyr-Met) (with W-91) cross-link spans 218–244 (YVNPEGPDGNPDPVAAAHDIRETFARM). Residue histidine 259 participates in heme b binding.

It belongs to the peroxidase family. Peroxidase/catalase subfamily. Homodimer or homotetramer. Requires heme b as cofactor. Post-translationally, formation of the three residue Trp-Tyr-Met cross-link is important for the catalase, but not the peroxidase activity of the enzyme.

It carries out the reaction H2O2 + AH2 = A + 2 H2O. The catalysed reaction is 2 H2O2 = O2 + 2 H2O. In terms of biological role, bifunctional enzyme with both catalase and broad-spectrum peroxidase activity. The polypeptide is Catalase-peroxidase 1 (Burkholderia cenocepacia (strain ATCC BAA-245 / DSM 16553 / LMG 16656 / NCTC 13227 / J2315 / CF5610) (Burkholderia cepacia (strain J2315))).